A 183-amino-acid chain; its full sequence is ATP synthase subunit delta (183 aa).

Belongs to the ATPase delta chain family. In terms of assembly, F-type ATPases have 2 components, F(1) - the catalytic core - and F(0) - the membrane proton channel. F(1) has five subunits: alpha(3), beta(3), gamma(1), delta(1), epsilon(1). F(0) has three main subunits: a(1), b(2) and c(10-14). The alpha and beta chains form an alternating ring which encloses part of the gamma chain. F(1) is attached to F(0) by a central stalk formed by the gamma and epsilon chains, while a peripheral stalk is formed by the delta and b chains.

It is found in the cell inner membrane. Its function is as follows. F(1)F(0) ATP synthase produces ATP from ADP in the presence of a proton or sodium gradient. F-type ATPases consist of two structural domains, F(1) containing the extramembraneous catalytic core and F(0) containing the membrane proton channel, linked together by a central stalk and a peripheral stalk. During catalysis, ATP synthesis in the catalytic domain of F(1) is coupled via a rotary mechanism of the central stalk subunits to proton translocation. In terms of biological role, this protein is part of the stalk that links CF(0) to CF(1). It either transmits conformational changes from CF(0) to CF(1) or is implicated in proton conduction. This is ATP synthase subunit delta from Desulfatibacillum aliphaticivorans.